We begin with the raw amino-acid sequence, 173 residues long: Protein-export protein SecB (173 aa).

The protein belongs to the SecB family. In terms of assembly, homotetramer, a dimer of dimers. One homotetramer interacts with 1 SecA dimer.

Its subcellular location is the cytoplasm. In terms of biological role, one of the proteins required for the normal export of preproteins out of the cell cytoplasm. It is a molecular chaperone that binds to a subset of precursor proteins, maintaining them in a translocation-competent state. It also specifically binds to its receptor SecA. This chain is Protein-export protein SecB, found in Novosphingobium aromaticivorans (strain ATCC 700278 / DSM 12444 / CCUG 56034 / CIP 105152 / NBRC 16084 / F199).